A 110-amino-acid polypeptide reads, in one-letter code: Putative protein RIG (110 aa).

Expressed predominantly in brain and weakly in heart and lung. Expression is reduced or undetectable in cultured glioma cells, primary glioblastoma cells and malignant glioblastoma tumors.

Functionally, may serve as a molecular marker for or play a role in the malignant progression of glioblastomas. The chain is Putative protein RIG (RIG) from Homo sapiens (Human).